The chain runs to 1117 residues: DNA polymerase (1117 aa).

Residues 591-621 (ESSPVASFEEDSEQTSDSSLGEVSSQGSSDG) form a disordered region. A compositionally biased stretch (low complexity) spans 606–618 (SDSSLGEVSSQGS).

It belongs to the DNA polymerase type-B family.

It is found in the host nucleus. It catalyses the reaction DNA(n) + a 2'-deoxyribonucleoside 5'-triphosphate = DNA(n+1) + diphosphate. This chain is DNA polymerase, found in Cavia porcellus (Guinea pig).